The primary structure comprises 281 residues: HTH-type transcriptional activator RamA (281 aa).

An HTH luxR-type domain is found at 213–278 (RIKQTTKLSA…EAVNAARRIG (66 aa)).

Functionally, ramA is a master regulator of acetate metabolism. It positively controls the expression of acnA, aceA, aceB, ack, pta and ramB genes in the presence of acetate. RamA is also a positive regulator of rpf2 gene expression during growth on glucose as the sole carbon source. This Corynebacterium glutamicum (strain ATCC 13032 / DSM 20300 / JCM 1318 / BCRC 11384 / CCUG 27702 / LMG 3730 / NBRC 12168 / NCIMB 10025 / NRRL B-2784 / 534) protein is HTH-type transcriptional activator RamA.